The primary structure comprises 590 residues: Fucose-1-phosphate guanylyltransferase (590 aa).

Expressed at highest levels in brain, moderately in testis, ovary and kidney, and weakly in liver, spleen, heart and lung.

It is found in the cytoplasm. The catalysed reaction is beta-L-fucose 1-phosphate + GTP + H(+) = GDP-beta-L-fucose + diphosphate. Its function is as follows. Catalyzes the formation of GDP-L-fucose from GTP and L-fucose-1-phosphate. Functions as a salvage pathway to reutilize L-fucose arising from the turnover of glycoproteins and glycolipids. The chain is Fucose-1-phosphate guanylyltransferase from Mus musculus (Mouse).